We begin with the raw amino-acid sequence, 380 residues long: Cytochrome b (380 aa).

The next 4 helical transmembrane spans lie at 34–54, 78–99, 114–134, and 179–199; these read FGSL…LLAM, WLIR…YMHI, WNTG…GYVL, and FFAL…IHLT. Residues His-84 and His-98 each coordinate heme b. Heme b is bound by residues His-183 and His-197. Residue His-202 participates in a ubiquinone binding. The next 4 membrane-spanning stretches (helical) occupy residues 227–247, 289–309, 321–341, and 348–368; these read LKDI…ALFS, LGGV…PFLH, LSQS…WIGS, and FIII…ILFP.

Belongs to the cytochrome b family. In terms of assembly, the cytochrome bc1 complex contains 11 subunits: 3 respiratory subunits (MT-CYB, CYC1 and UQCRFS1), 2 core proteins (UQCRC1 and UQCRC2) and 6 low-molecular weight proteins (UQCRH/QCR6, UQCRB/QCR7, UQCRQ/QCR8, UQCR10/QCR9, UQCR11/QCR10 and a cleavage product of UQCRFS1). This cytochrome bc1 complex then forms a dimer. Heme b serves as cofactor.

The protein localises to the mitochondrion inner membrane. Component of the ubiquinol-cytochrome c reductase complex (complex III or cytochrome b-c1 complex) that is part of the mitochondrial respiratory chain. The b-c1 complex mediates electron transfer from ubiquinol to cytochrome c. Contributes to the generation of a proton gradient across the mitochondrial membrane that is then used for ATP synthesis. In Oceanodroma tristrami (Tristram's storm-petrel), this protein is Cytochrome b (MT-CYB).